The primary structure comprises 53 residues: Rubredoxin (53 aa).

Residues Met-1–Ile-52 form the Rubredoxin-like domain. Cys-6, Cys-9, Cys-39, and Cys-42 together coordinate Fe cation.

It belongs to the rubredoxin family. Fe(3+) is required as a cofactor.

In terms of biological role, rubredoxin is a small nonheme, iron protein lacking acid-labile sulfide. Its single Fe, chelated to 4 Cys, functions as an electron acceptor and may also stabilize the conformation of the molecule. This chain is Rubredoxin (rub), found in Pyrococcus abyssi (strain GE5 / Orsay).